The sequence spans 383 residues: 8-amino-7-oxononanoate synthase (383 aa).

Substrate is bound at residue R23. Position 110-111 (G110–F111) interacts with pyridoxal 5'-phosphate. H135 is a binding site for substrate. Pyridoxal 5'-phosphate-binding residues include S181, H209, and T235. K238 bears the N6-(pyridoxal phosphate)lysine mark. T351 is a binding site for substrate.

It belongs to the class-II pyridoxal-phosphate-dependent aminotransferase family. BioF subfamily. Homodimer. The cofactor is pyridoxal 5'-phosphate.

It catalyses the reaction 6-carboxyhexanoyl-[ACP] + L-alanine + H(+) = (8S)-8-amino-7-oxononanoate + holo-[ACP] + CO2. It participates in cofactor biosynthesis; biotin biosynthesis. Catalyzes the decarboxylative condensation of pimeloyl-[acyl-carrier protein] and L-alanine to produce 8-amino-7-oxononanoate (AON), [acyl-carrier protein], and carbon dioxide. This is 8-amino-7-oxononanoate synthase from Aliivibrio fischeri (strain ATCC 700601 / ES114) (Vibrio fischeri).